Consider the following 360-residue polypeptide: Peptide chain release factor 1 (360 aa).

At Gln237 the chain carries N5-methylglutamine.

It belongs to the prokaryotic/mitochondrial release factor family. Post-translationally, methylated by PrmC. Methylation increases the termination efficiency of RF1.

It localises to the cytoplasm. Functionally, peptide chain release factor 1 directs the termination of translation in response to the peptide chain termination codons UAG and UAA. The sequence is that of Peptide chain release factor 1 from Pseudomonas putida (strain ATCC 700007 / DSM 6899 / JCM 31910 / BCRC 17059 / LMG 24140 / F1).